The following is a 134-amino-acid chain: Thionin-2.2 (134 aa).

A signal peptide spans 1 to 24 (MEGKTVISSLLIMSLVLAQIQVEA). 3 disulfides stabilise this stretch: Cys27–Cys64, Cys28–Cys56, and Cys40–Cys50. Residues 71–134 (DILENSGDAV…GGSTAAVKSA (64 aa)) constitute a propeptide, acidic domain.

It belongs to the plant thionin (TC 1.C.44) family. Low basal expression in seedlings. Also detected in rosette leaves.

It localises to the secreted. Functionally, thionins are small plant proteins which are toxic to animal cells. They seem to exert their toxic effect at the level of the cell membrane. Their precise function is not known. The polypeptide is Thionin-2.2 (THI2.2) (Arabidopsis thaliana (Mouse-ear cress)).